A 376-amino-acid polypeptide reads, in one-letter code: Putative glutamate--cysteine ligase 2-1 (376 aa).

Belongs to the glutamate--cysteine ligase type 2 family. YbdK subfamily.

The catalysed reaction is L-cysteine + L-glutamate + ATP = gamma-L-glutamyl-L-cysteine + ADP + phosphate + H(+). Its function is as follows. ATP-dependent carboxylate-amine ligase which exhibits weak glutamate--cysteine ligase activity. The sequence is that of Putative glutamate--cysteine ligase 2-1 from Mycobacterium sp. (strain KMS).